The sequence spans 264 residues: uncharacterized protein (264 aa).

The chain crosses the membrane as a helical span at residues 7-27 (LTLGICLVLLIILIVGYVIMT).

The protein belongs to the staphylococcal tandem lipoprotein family.

It is found in the cell membrane. This is an uncharacterized protein from Staphylococcus aureus (strain MRSA252).